Consider the following 398-residue polypeptide: Acetate kinase (398 aa).

Residue N8 participates in Mg(2+) binding. Residue K15 coordinates ATP. Residue R89 coordinates substrate. The active-site Proton donor/acceptor is D146. ATP is bound by residues 206–210 (HIGNG), 283–285 (DMR), and 331–335 (GMGEN). E383 provides a ligand contact to Mg(2+).

The protein belongs to the acetokinase family. Homodimer. The cofactor is Mg(2+). Mn(2+) is required as a cofactor.

The protein localises to the cytoplasm. The catalysed reaction is acetate + ATP = acetyl phosphate + ADP. It participates in metabolic intermediate biosynthesis; acetyl-CoA biosynthesis; acetyl-CoA from acetate: step 1/2. In terms of biological role, catalyzes the formation of acetyl phosphate from acetate and ATP. Can also catalyze the reverse reaction. The chain is Acetate kinase from Streptococcus pyogenes serotype M49 (strain NZ131).